The sequence spans 558 residues: Urocanate hydratase (558 aa).

NAD(+) is bound by residues 54–55, Gln132, 178–180, Glu198, 244–245, 265–269, 275–276, and Tyr324; these read GG, GMG, NA, QTSAH, and YL. The active site involves Cys412. An NAD(+)-binding site is contributed by Gly494.

It belongs to the urocanase family. NAD(+) serves as cofactor.

It localises to the cytoplasm. It catalyses the reaction 4-imidazolone-5-propanoate = trans-urocanate + H2O. The protein operates within amino-acid degradation; L-histidine degradation into L-glutamate; N-formimidoyl-L-glutamate from L-histidine: step 2/3. Its function is as follows. Catalyzes the conversion of urocanate to 4-imidazolone-5-propionate. The sequence is that of Urocanate hydratase from Acinetobacter baumannii (strain ACICU).